The following is a 641-amino-acid chain: E3 ubiquitin-protein ligase TRIM47 (641 aa).

The RING-type zinc-finger motif lies at 9-58 (CPICLEPLREPVTLPCGHNFCLACLGALWPHRSAGGTGGSGGPARCPLCQ). Phosphothreonine is present on threonine 72. The interval 81 to 123 (QGSVPGPMSAPASGSTRGATPEPSAPSAPPPAPEPSAPCAPEQ) is disordered. The segment covering 103 to 118 (PSAPSAPPPAPEPSAP) has biased composition (pro residues). Residues 181–221 (LEESLCPRHLRPLERYCRVERVCLCEACATQDHRGHELVPL) form a B box-type zinc finger. 4 residues coordinate Zn(2+): cysteine 186, histidine 189, cysteine 208, and histidine 213. Residues 305–325 (QGDLRRQEEQRSRLSKARHNL) adopt a coiled-coil conformation. Phosphoserine is present on serine 393. The segment at 396-416 (DGLQKLGSEDVESQDPDSTSL) is disordered. The region spanning 413–634 (STSLLESEAP…LQIGPLKKSC (222 aa)) is the B30.2/SPRY domain. Phosphoserine is present on serine 464. At arginine 585 the chain carries Omega-N-methylarginine. Phosphoserine is present on serine 591.

This sequence belongs to the TRIM/RBCC family. In terms of tissue distribution, expressed in hepatocytes, expression is increased in fatty livers.

Its subcellular location is the cytoplasm. It localises to the nucleus. The catalysed reaction is S-ubiquitinyl-[E2 ubiquitin-conjugating enzyme]-L-cysteine + [acceptor protein]-L-lysine = [E2 ubiquitin-conjugating enzyme]-L-cysteine + N(6)-ubiquitinyl-[acceptor protein]-L-lysine.. Its pathway is protein modification; protein ubiquitination. Its function is as follows. E3 ubiquitin-protein ligase that mediates the ubiquitination and proteasomal degradation of CYLD. The protein is E3 ubiquitin-protein ligase TRIM47 of Mus musculus (Mouse).